Reading from the N-terminus, the 140-residue chain is Nucleoside diphosphate kinase (140 aa).

Residues K11, F59, R87, T93, R104, and N114 each coordinate ATP. The Pros-phosphohistidine intermediate role is filled by H117.

Belongs to the NDK family. Homotetramer. The cofactor is Mg(2+).

The protein localises to the cytoplasm. It carries out the reaction a 2'-deoxyribonucleoside 5'-diphosphate + ATP = a 2'-deoxyribonucleoside 5'-triphosphate + ADP. The enzyme catalyses a ribonucleoside 5'-diphosphate + ATP = a ribonucleoside 5'-triphosphate + ADP. In terms of biological role, major role in the synthesis of nucleoside triphosphates other than ATP. The ATP gamma phosphate is transferred to the NDP beta phosphate via a ping-pong mechanism, using a phosphorylated active-site intermediate. This Bradyrhizobium sp. (strain BTAi1 / ATCC BAA-1182) protein is Nucleoside diphosphate kinase.